The chain runs to 140 residues: Phosphoribosyl-AMP cyclohydrolase (140 aa).

Mg(2+) is bound at residue Asp78. Residue Cys79 coordinates Zn(2+). The Mg(2+) site is built by Asp80 and Asp82. Residues Cys96 and Cys103 each coordinate Zn(2+).

Belongs to the PRA-CH family. In terms of assembly, homodimer. The cofactor is Mg(2+). It depends on Zn(2+) as a cofactor.

It is found in the cytoplasm. The enzyme catalyses 1-(5-phospho-beta-D-ribosyl)-5'-AMP + H2O = 1-(5-phospho-beta-D-ribosyl)-5-[(5-phospho-beta-D-ribosylamino)methylideneamino]imidazole-4-carboxamide. The protein operates within amino-acid biosynthesis; L-histidine biosynthesis; L-histidine from 5-phospho-alpha-D-ribose 1-diphosphate: step 3/9. Catalyzes the hydrolysis of the adenine ring of phosphoribosyl-AMP. This is Phosphoribosyl-AMP cyclohydrolase from Ralstonia pickettii (strain 12J).